A 407-amino-acid chain; its full sequence is V-set and immunoglobulin domain-containing protein 1 (407 aa).

The first 22 residues, 1 to 22 (MMVFAFWKVFLILNCLAGQVSM), serve as a signal peptide directing secretion. Residues 23–134 (VQVTIPDTFV…HFVGKNQGLL (112 aa)) form the Ig-like V-type domain. Residues 23–234 (VQVTIPDTFV…EIDLTSSHPE (212 aa)) are Extracellular-facing. Asn39 carries N-linked (GlcNAc...) asparagine glycosylation. Disulfide bonds link Cys44/Cys118 and Cys163/Cys213. Residues 145 to 229 (PFCTIQGRPE…GNSSCEIDLT (85 aa)) enclose the Ig-like C2-type domain. N-linked (GlcNAc...) asparagine glycans are attached at residues Asn202 and Asn221. The chain crosses the membrane as a helical span at residues 235-255 (VGIIIGALVGALIGAAVIICV). The Cytoplasmic portion of the chain corresponds to 256–407 (VYFARNKVKS…SKAGEDTVKA (152 aa)). 2 disordered regions span residues 268–289 (QKNL…PQQS) and 318–407 (TAVL…TVKA). Phosphoserine is present on residues Ser273 and Ser274. The span at 361 to 371 (DPETETEPEPE) shows a compositional bias: acidic residues.

Its subcellular location is the membrane. In Mus musculus (Mouse), this protein is V-set and immunoglobulin domain-containing protein 1 (Vsig1).